The primary structure comprises 261 residues: MSRKPLIAGNWKMNLNHFEAIALVQKIAFALPDKYYDKVDVTVLPPFTDLRSVQTLVDGDKLRLSYGAQDLSQHDSGAYTGDISGAFLAKLGCTFVVVGHSERRTYHNEDDALVAAKAATALKHELTPIICIGEHLEVREAGNHVIHCEEQLRGSLAGLSAEQIGKVVIAYEPVWAIGTGRVASASDAQEVCAAIRKELASLASAQIADSVRVLYGGSVNAKNVGELIAQDDIDGGLVGGASLDGEQFATLAAIAAGGPLP.

10–12 (NWK) is a binding site for substrate. The active-site Electrophile is the His-100. Glu-172 serves as the catalytic Proton acceptor. Substrate contacts are provided by residues Gly-178, Ser-218, and 239–240 (GG).

It belongs to the triosephosphate isomerase family. As to quaternary structure, homodimer.

Its subcellular location is the cytoplasm. It carries out the reaction D-glyceraldehyde 3-phosphate = dihydroxyacetone phosphate. The protein operates within carbohydrate biosynthesis; gluconeogenesis. It functions in the pathway carbohydrate degradation; glycolysis; D-glyceraldehyde 3-phosphate from glycerone phosphate: step 1/1. Functionally, involved in the gluconeogenesis. Catalyzes stereospecifically the conversion of dihydroxyacetone phosphate (DHAP) to D-glyceraldehyde-3-phosphate (G3P). The sequence is that of Triosephosphate isomerase from Mycolicibacterium paratuberculosis (strain ATCC BAA-968 / K-10) (Mycobacterium paratuberculosis).